The primary structure comprises 466 residues: Zinc finger protein NUTCRACKER (466 aa).

Positions 1–23 are enriched in polar residues; that stretch reads MTSEVLQTISSGSGFAQPQSSST. The interval 1–29 is disordered; it reads MTSEVLQTISSGSGFAQPQSSSTLDHDES. Ser-56 carries the phosphoserine modification. A C2H2-type 1 zinc finger spans residues 66-88; the sequence is FLCEVCGKGFQRDQNLQLHRRGH. Thr-98 carries the post-translational modification Phosphothreonine; by KIN10. Residues 107-137 form a C2H2-type 2 zinc finger; sequence YVCPEKTCVHHHSSRALGDLTGIKKHFCRKH. A Nuclear localization signal motif is present at residues 134-141; the sequence is CRKHGEKK. The C2H2-type 2; degenerate zinc finger occupies 142–165; sequence WTCEKCAKRYAVQSDWKAHSKTCG. Residues Cys-144, Cys-147, His-160, Cys-164, Cys-171, and Cys-173 each contribute to the Zn(2+) site. A CCHC-type 2; atypical zinc finger spans residues 169-192; the sequence is YRCDCGTIFSRRDSFITHRAFCDA. Residues Ser-178 and Ser-182 each carry the phosphoserine; by KIN10 modification. An SHR-binding region spans residues 179 to 191; the sequence is RRDSFITHRAFCD. Zn(2+)-binding residues include His-186 and Cys-190.

As to quaternary structure, interacts with AKIN10. In terms of processing, inhibition of transcription factor activity by KIN10-mediated phosphorylation at Thr-98, Ser-178 and Ser-182 under sugar deprivation conditions, thus delaying flowering. In terms of tissue distribution, highly expressed in vegetative organs and at lower levels in flowers and siliques. Expressed predominantly in roots. In roots, present in cortex, endodermis, and pericycle layer.

The protein resides in the nucleus. Transcription activator that binds to the DNA sequence 5'-CTTTTGTCC-3'. Regulates photoperiodic flowering by modulating sugar transport and metabolism. Regulates SUS1 and SUS4. Transcription factor that regulates tissue boundaries and asymmetric cell division. Contributes to the sequestration of 'SHORT-ROOT' to the nucleus. The sequence is that of Zinc finger protein NUTCRACKER from Arabidopsis thaliana (Mouse-ear cress).